The sequence spans 95 residues: RING finger protein Z (95 aa).

Residues 1–16 (MGNSKSKSNPSSSSES) show a composition bias toward low complexity. The segment at 1–23 (MGNSKSKSNPSSSSESQKGAPTV) is disordered. Gly-2 carries N-myristoyl glycine; by host lipidation. The RING-type; atypical zinc-finger motif lies at 40-76 (CKCCWFADKNLIKCSDHYLCLRCLNVMLKNSDLCNIC). The PTAP/PSAP motif signature appears at 90–93 (PSAP).

Belongs to the arenaviridae Z protein family. As to quaternary structure, interacts with protein NP; this interaction probably directs the encapsidated genome to budding sites. Interacts (via RING domain) with polymerase L; this interaction inhibits viral transcription and replication, Z partially blocks the product exit tunnel for the releasing nascent RNA product. Interacts with the glycoprotein complex; this interaction plays a role in virion budding. Interacts with host eIF4E; this interaction results in eIF4E reduced affinity for its substrate, the 5'-m7 G cap structure. Interacts (via late-budding domain) with host TSG101; this interaction is essential for budding and release of viral particles. Interacts with host RPLP0; this interaction may serve to load ribosome-like particles inside the virion. Interacts with host PML; this interaction induces PML bodies redistribution in the cytoplasm upon viral infection. Myristoylation is required for the role of RING finger protein Z in assembly and budding.

It is found in the virion. The protein localises to the host cytoplasm. Its subcellular location is the host perinuclear region. The protein resides in the host cell membrane. In terms of biological role, plays a crucial role in virion assembly and budding. Expressed late in the virus life cycle, it acts as an inhibitor of viral transcription and RNA synthesis by interacting with the viral polymerase L. Presumably recruits the NP encapsidated genome to cellular membranes at budding sites via direct interaction with NP. Plays critical roles in the final steps of viral release by interacting with host TSG101, a member of the vacuolar protein-sorting pathway and using other cellular host proteins involved in vesicle formation pathway. The budding of the virus progeny occurs after association of protein Z with the viral glycoprotein complex SSP-GP1-GP2 at the cell periphery, step that requires myristoylation of protein Z. Also selectively represses protein production by associating with host eIF4E. In cell-based minigenome assay, has an inhibitory effect on the ribonucleoprotein machinery (vRNP), which is responsible for the replication and transcription of the viral genome. The polypeptide is RING finger protein Z (Guanarito mammarenavirus (isolate Human/Venezuela/NH-95551/1990) (GTOV)).